We begin with the raw amino-acid sequence, 211 residues long: Uridine kinase (211 aa).

Gly13–Ser20 serves as a coordination point for ATP.

This sequence belongs to the uridine kinase family.

The protein localises to the cytoplasm. The enzyme catalyses uridine + ATP = UMP + ADP + H(+). The catalysed reaction is cytidine + ATP = CMP + ADP + H(+). The protein operates within pyrimidine metabolism; CTP biosynthesis via salvage pathway; CTP from cytidine: step 1/3. It participates in pyrimidine metabolism; UMP biosynthesis via salvage pathway; UMP from uridine: step 1/1. The protein is Uridine kinase of Shewanella pealeana (strain ATCC 700345 / ANG-SQ1).